A 201-amino-acid chain; its full sequence is Transgelin (201 aa).

The residue at position 2 (A2) is an N-acetylalanine. Residues 24–137 enclose the Calponin-homology (CH) domain; the sequence is EELEERLVEW…RTVMALGSLA (114 aa). The segment at 154-161 is could be involved in actin-binding; the sequence is KKAQEHKR. S166 is modified (phosphoserine). K172 carries the post-translational modification N6-acetyllysine. One copy of the Calponin-like repeat lies at 175 to 200; sequence IGLQMGSNRGASQAGMTGYGRPRQII. S181 carries the post-translational modification Phosphoserine. Position 183 is an omega-N-methylarginine (R183).

Belongs to the calponin family. Smooth muscle and mesenchymal cells but not in skeletal muscle or lymphocytes.

It localises to the cytoplasm. Actin cross-linking/gelling protein. This chain is Transgelin (Tagln), found in Rattus norvegicus (Rat).